Here is a 389-residue protein sequence, read N- to C-terminus: Chalcone synthase 4-2 (389 aa).

The active site involves Cys164.

Belongs to the thiolase-like superfamily. Chalcone/stilbene synthases family.

It carries out the reaction (E)-4-coumaroyl-CoA + 3 malonyl-CoA + 3 H(+) = 2',4,4',6'-tetrahydroxychalcone + 3 CO2 + 4 CoA. It participates in secondary metabolite biosynthesis; flavonoid biosynthesis. In terms of biological role, the primary product of this enzyme is 4,2',4',6'-tetrahydroxychalcone (also termed naringenin-chalcone or chalcone) which can under specific conditions spontaneously isomerize into naringenin. This is Chalcone synthase 4-2 (CHS4-2) from Medicago sativa (Alfalfa).